Reading from the N-terminus, the 304-residue chain is N-carbamoyl-D-amino acid hydrolase (304 aa).

The 272-residue stretch at 5-276 (MILAVGQQGP…DEVITAAVDL (272 aa)) folds into the CN hydrolase domain. Active-site residues include Glu47, Lys127, and Cys172.

Homotetramer.

It catalyses the reaction an N-carbamoyl-D-amino acid + H2O + 2 H(+) = a D-alpha-amino acid + NH4(+) + CO2. In terms of biological role, the enzyme catalyzes the hydrolysis of N-carbamoyl-D-amino acids to the corresponding which are useful intermediates in the preparation of beta-lactam antibiotics. Industrial production of beta-lactam antibiotics is now being developed using this enzyme. This Rhizobium radiobacter (Agrobacterium tumefaciens) protein is N-carbamoyl-D-amino acid hydrolase.